The sequence spans 195 residues: N-(5'-phosphoribosyl)anthranilate isomerase (195 aa).

The protein belongs to the TrpF family.

It catalyses the reaction N-(5-phospho-beta-D-ribosyl)anthranilate = 1-(2-carboxyphenylamino)-1-deoxy-D-ribulose 5-phosphate. Its pathway is amino-acid biosynthesis; L-tryptophan biosynthesis; L-tryptophan from chorismate: step 3/5. The chain is N-(5'-phosphoribosyl)anthranilate isomerase from Streptococcus gordonii (strain Challis / ATCC 35105 / BCRC 15272 / CH1 / DL1 / V288).